Consider the following 639-residue polypeptide: tRNA (uracil(54)-C(5))-methyltransferase (639 aa).

The segment at 78 to 113 (VPPTMKHTVDNKRLSSPLTDSGNRRTKKPKLRKYKA) is disordered. A phosphoserine mark is found at Ser-92 and Ser-93. Over residues 101 to 113 (RRTKKPKLRKYKA) the composition is skewed to basic residues. The TRAM domain occupies 163-228 (LQYHREVKNV…PYYVESDLLD (66 aa)). Gln-461, Tyr-496, Glu-517, and Asp-564 together coordinate S-adenosyl-L-methionine. The active-site Nucleophile is Cys-591. The active-site Proton acceptor is Glu-631.

Belongs to the class I-like SAM-binding methyltransferase superfamily. RNA M5U methyltransferase family.

It carries out the reaction uridine(54) in tRNA + S-adenosyl-L-methionine = 5-methyluridine(54) in tRNA + S-adenosyl-L-homocysteine + H(+). In terms of biological role, catalyzes the formation of 5-methyl-uridine at position 54 (m5U54) in all tRNA. May also have a role in tRNA stabilization or maturation. In Saccharomyces cerevisiae (strain ATCC 204508 / S288c) (Baker's yeast), this protein is tRNA (uracil(54)-C(5))-methyltransferase (TRM2).